We begin with the raw amino-acid sequence, 236 residues long: Small ribosomal subunit protein uS5 (236 aa).

An S5 DRBM domain is found at glutamate 61–isoleucine 124.

It belongs to the universal ribosomal protein uS5 family. Part of the 30S ribosomal subunit. Contacts protein S4.

Functionally, with S4 and S12 plays an important role in translational accuracy. The protein is Small ribosomal subunit protein uS5 of Pyrococcus abyssi (strain GE5 / Orsay).